We begin with the raw amino-acid sequence, 104 residues long: Pyrimidine/purine nucleoside phosphorylase (104 aa).

Belongs to the nucleoside phosphorylase PpnP family.

The enzyme catalyses a purine D-ribonucleoside + phosphate = a purine nucleobase + alpha-D-ribose 1-phosphate. It carries out the reaction adenosine + phosphate = alpha-D-ribose 1-phosphate + adenine. It catalyses the reaction cytidine + phosphate = cytosine + alpha-D-ribose 1-phosphate. The catalysed reaction is guanosine + phosphate = alpha-D-ribose 1-phosphate + guanine. The enzyme catalyses inosine + phosphate = alpha-D-ribose 1-phosphate + hypoxanthine. It carries out the reaction thymidine + phosphate = 2-deoxy-alpha-D-ribose 1-phosphate + thymine. It catalyses the reaction uridine + phosphate = alpha-D-ribose 1-phosphate + uracil. The catalysed reaction is xanthosine + phosphate = alpha-D-ribose 1-phosphate + xanthine. Functionally, catalyzes the phosphorolysis of diverse nucleosides, yielding D-ribose 1-phosphate and the respective free bases. Can use uridine, adenosine, guanosine, cytidine, thymidine, inosine and xanthosine as substrates. Also catalyzes the reverse reactions. This chain is Pyrimidine/purine nucleoside phosphorylase, found in Syntrophotalea carbinolica (strain DSM 2380 / NBRC 103641 / GraBd1) (Pelobacter carbinolicus).